The following is a 446-amino-acid chain: UDP-N-acetylglucosamine--dolichyl-phosphate N-acetylglucosaminephosphotransferase (446 aa).

2 consecutive transmembrane segments (helical) span residues 1-21 and 25-45; these read MIESCFNVGIWATGLALLMNQ and PLLSNVGLSVLAYKATAMFIP. UDP-N-acetyl-alpha-D-glucosamine-binding positions include 59–61 and Glu71; that span reads KDM. 2 consecutive transmembrane segments (helical) span residues 73–93 and 123–143; these read MGAVSALVYFMCMIIFIPVLF and LLGAYLSALLSILSVSLLGIL. Lys154 lines the dolichyl phosphate pocket. A run of 2 helical transmembrane segments spans residues 155 to 175 and 191 to 211; these read FFLPAIAAIPLLVVYYVDYGV and SLINLGFLYYFYMAAVAIFCP. 208–216 is a dolichyl phosphate binding site; the sequence is IFCPNSINI. A Mg(2+)-binding site is contributed by Asn215. 4 consecutive transmembrane segments (helical) span residues 216 to 236, 254 to 274, 282 to 302, and 311 to 331; these read IIAGVNGVEAGQSLVLALVIA, AHLLSLYLVLPLIGVTAGLLK, VFVGDTFCYFAGMVMAVVGIL, and LFFIPQIFNFALSVPQLFGLV. Residue Asn221 coordinates UDP-N-acetyl-alpha-D-glucosamine. Residue Asp286 participates in Mg(2+) binding. 335-337 contributes to the UDP-N-acetyl-alpha-D-glucosamine binding site; that stretch reads RHR. The N-linked (GlcNAc...) asparagine glycan is linked to Asn395. The helical transmembrane segment at 412–432 threads the bilayer; the sequence is DHLTICIMGLQLLTGIFGLII.

This sequence belongs to the glycosyltransferase 4 family. Requires Mg(2+) as cofactor.

The protein localises to the endoplasmic reticulum membrane. The catalysed reaction is a di-trans,poly-cis-dolichyl phosphate + UDP-N-acetyl-alpha-D-glucosamine = an N-acetyl-alpha-D-glucosaminyl-diphospho-di-trans,poly-cis-dolichol + UMP. The protein operates within protein modification; protein glycosylation. Its activity is regulated as follows. Inhibited by natural nucleoside antibiotic tunicamycin, which acts as a structural analog and competitor of UDP-GlcNAc. In terms of biological role, UDP-N-acetylglucosamine--dolichyl-phosphate N-acetylglucosaminephosphotransferase that operates in the biosynthetic pathway of dolichol-linked oligosaccharides, the glycan precursors employed in protein asparagine (N)-glycosylation. The assembly of dolichol-linked oligosaccharides begins on the cytosolic side of the endoplasmic reticulum membrane and finishes in its lumen. The sequential addition of sugars to dolichol pyrophosphate produces dolichol-linked oligosaccharides containing fourteen sugars, including two GlcNAcs, nine mannoses and three glucoses. Once assembled, the oligosaccharide is transferred from the lipid to nascent proteins by oligosaccharyltransferases. Catalyzes the initial step of dolichol-linked oligosaccharide biosynthesis, transfering GlcNAc-1-P from cytosolic UDP-GlcNAc onto the carrier lipid dolichyl phosphate (P-dolichol), yielding GlcNAc-P-P-dolichol embedded in the cytoplasmic leaflet of the endoplasmic reticulum membrane. This is UDP-N-acetylglucosamine--dolichyl-phosphate N-acetylglucosaminephosphotransferase (gpt2) from Schizosaccharomyces pombe (strain 972 / ATCC 24843) (Fission yeast).